Reading from the N-terminus, the 169-residue chain is NADH-quinone oxidoreductase subunit I (169 aa).

2 4Fe-4S ferredoxin-type domains span residues 60-90 (LRRY…IEAE) and 100-129 (TRYD…EGPN). Residues cysteine 70, cysteine 73, cysteine 76, cysteine 80, cysteine 109, cysteine 112, cysteine 115, and cysteine 119 each contribute to the [4Fe-4S] cluster site.

It belongs to the complex I 23 kDa subunit family. In terms of assembly, NDH-1 is composed of 14 different subunits. Subunits NuoA, H, J, K, L, M, N constitute the membrane sector of the complex. Requires [4Fe-4S] cluster as cofactor.

The protein localises to the cell membrane. The catalysed reaction is a quinone + NADH + 5 H(+)(in) = a quinol + NAD(+) + 4 H(+)(out). Its function is as follows. NDH-1 shuttles electrons from NADH, via FMN and iron-sulfur (Fe-S) centers, to quinones in the respiratory chain. The immediate electron acceptor for the enzyme in this species is believed to be ubiquinone. Couples the redox reaction to proton translocation (for every two electrons transferred, four hydrogen ions are translocated across the cytoplasmic membrane), and thus conserves the redox energy in a proton gradient. This chain is NADH-quinone oxidoreductase subunit I, found in Wolbachia pipientis wMel.